We begin with the raw amino-acid sequence, 237 residues long: 3-oxoacyl-[acyl-carrier-protein] reductase (237 aa).

Methionine 1 carries the N-acetylmethionine modification. NADP(+) contacts are provided by residues 11 to 14, 34 to 35, aspartate 56, and 83 to 85; these read SRGI, RN, and AAG. Serine 135 contacts substrate. Residues tyrosine 148, lysine 152, and 181 to 183 each bind NADP(+); that span reads IHT. Catalysis depends on tyrosine 148, which acts as the Proton acceptor. Lysine 195 bears the N6-acetyllysine mark.

Belongs to the short-chain dehydrogenases/reductases (SDR) family. Homotetramer (in vitro). Heterotetramer with HSD17B8; contains two molecules each of HSD17B8 and CBR4. Does not form homotetramers when HSD17B8 is coexpressed, only heterotetramers (in vitro).

It localises to the mitochondrion matrix. It catalyses the reaction a (3R)-hydroxyacyl-[ACP] + NADP(+) = a 3-oxoacyl-[ACP] + NADPH + H(+). It carries out the reaction a quinone + NADPH + H(+) = a quinol + NADP(+). Its pathway is lipid metabolism; fatty acid biosynthesis. Its function is as follows. Component of the heterotetramer complex KAR (3-ketoacyl-[acyl carrier protein] reductase or 3-ketoacyl-[ACP] reductase) that forms part of the mitochondrial fatty acid synthase (mtFAS). Beta-subunit of the KAR heterotetramer complex, responsible for the 3-ketoacyl-ACP reductase activity of the mtFAS, reduces 3-oxoacyl-[ACP] to (3R)-hydroxyacyl-[ACP] in a NADPH-dependent manner with no chain length preference, thereby participating in mitochondrial fatty acid biosynthesis. The homotetramer has NADPH-dependent quinone reductase activity (in vitro), hence could play a role in protection against cytotoxicity of exogenous quinones. As a heterotetramer, it can also reduce 9,10-phenanthrenequinone, 1,4-benzoquinone and various other o-quinones and p-quinones (in vitro). In Bos taurus (Bovine), this protein is 3-oxoacyl-[acyl-carrier-protein] reductase (CBR4).